The sequence spans 1934 residues: Myosin-7 (1934 aa).

Residues 31–80 (DLKKDVFVPDDKEEFVKAKIVSREGGKVTAETENGKTVTVKEDQVMQQNP) enclose the Myosin N-terminal SH3-like domain. The region spanning 84-777 (DKIEDMAMLT…LLGLLEEMRD (694 aa)) is the Myosin motor domain. Lys-128 carries the N6,N6,N6-trimethyllysine modification. 177–184 (GESGAGKT) contacts ATP. A Phosphothreonine modification is found at Thr-377. 2 actin-binding regions span residues 654-676 (LNKLMTNLRSTHPHFVRCIIPNE) and 756-770 (KFGHTKVFFKAGLLG). The IQ domain maps to 780-809 (LSRIITRIQAQSRGLLSRMEFKKLLERRDS). Residues 839-1934 (LKSAETEKEM…DIGAKGLNEE (1096 aa)) are a coiled coil. Phosphoserine is present on residues Ser-1136 and Ser-1268. At Thr-1281 the chain carries Phosphothreonine. The residue at position 1307 (Tyr-1307) is a Phosphotyrosine. The residue at position 1308 (Thr-1308) is a Phosphothreonine. Position 1509 is a phosphoserine (Ser-1509). Thr-1512 carries the post-translational modification Phosphothreonine. The interval 1914 to 1934 (SQVNKLRAKSRDIGAKGLNEE) is disordered. The segment covering 1922-1934 (KSRDIGAKGLNEE) has biased composition (basic and acidic residues).

Belongs to the TRAFAC class myosin-kinesin ATPase superfamily. Myosin family. In terms of assembly, muscle myosin is a hexameric protein that consists of 2 heavy chain subunits (MHC), 2 alkali light chain subunits (MLC) and 2 regulatory light chain subunits (MLC-2). Interacts with ECPAS. Interacts (via C-terminus) with LRRC39.

Its subcellular location is the cytoplasm. It localises to the myofibril. The protein resides in the sarcomere. In terms of biological role, myosins are actin-based motor molecules with ATPase activity essential for muscle contraction. Forms regular bipolar thick filaments that, together with actin thin filaments, constitute the fundamental contractile unit of skeletal and cardiac muscle. In Mesocricetus auratus (Golden hamster), this protein is Myosin-7 (MYH7).